The sequence spans 286 residues: Quinone oxidoreductase 2 (286 aa).

Residues 6 to 11, Arg-33, 73 to 75, 138 to 143, and Arg-171 each bind NADP(+); these read GATGQL, SSS, and GWYSEN.

The protein belongs to the NmrA-type oxidoreductase family. In terms of assembly, monomer.

The enzyme catalyses a quinone + NADH + H(+) = a quinol + NAD(+). The catalysed reaction is a quinone + NADPH + H(+) = a quinol + NADP(+). Quinone oxidoreductase that may play some additional role beyond quinone reduction. Potential redox sensor protein. Overexpression induces retardation of growth. The chain is Quinone oxidoreductase 2 (qorB) from Escherichia coli (strain K12).